The following is a 211-amino-acid chain: Probable GTP-binding protein EngB (211 aa).

The 176-residue stretch at 13 to 188 folds into the EngB-type G domain; the sequence is SGYEIAFAGR…ASVMAGRLHF (176 aa). Residues 21–28, 48–52, 67–70, 134–137, and 167–169 each bind GTP; these read GRSNAGKS, GRTQM, DLPG, TKAD, and FSS. Mg(2+)-binding residues include S28 and T50.

It belongs to the TRAFAC class TrmE-Era-EngA-EngB-Septin-like GTPase superfamily. EngB GTPase family. Mg(2+) is required as a cofactor.

Necessary for normal cell division and for the maintenance of normal septation. This is Probable GTP-binding protein EngB from Acinetobacter baumannii (strain ATCC 17978 / DSM 105126 / CIP 53.77 / LMG 1025 / NCDC KC755 / 5377).